The chain runs to 948 residues: RNA polymerase-associated protein RapA (948 aa).

The Helicase ATP-binding domain occupies 164–332 (EVADRSAPRV…FARLRLLDPN (169 aa)). 177-184 (DEVGLGKT) contributes to the ATP binding site. The DEAH box signature appears at 278 to 281 (DEAH). In terms of domain architecture, Helicase C-terminal spans 473 to 627 (RVDWLIDTLK…TCPTGNALQH (155 aa)).

It belongs to the SNF2/RAD54 helicase family. RapA subfamily. As to quaternary structure, interacts with the RNAP. Has a higher affinity for the core RNAP than for the holoenzyme. Its ATPase activity is stimulated by binding to RNAP.

Its function is as follows. Transcription regulator that activates transcription by stimulating RNA polymerase (RNAP) recycling in case of stress conditions such as supercoiled DNA or high salt concentrations. Probably acts by releasing the RNAP, when it is trapped or immobilized on tightly supercoiled DNA. Does not activate transcription on linear DNA. Probably not involved in DNA repair. This chain is RNA polymerase-associated protein RapA, found in Pseudomonas putida (strain W619).